The sequence spans 534 residues: Membrane-bound lytic murein transglycosylase F (534 aa).

A signal peptide spans 1 to 24 (MQISQFNRLKRSALLFASVLLLSA). The segment at 25-285 (CQIESEPKSE…TLEEKYIGHI (261 aa)) is non-LT domain. Residues 287–534 (AFDYVDTRAF…AEQTPVPKAE (248 aa)) are LT domain. Residue Glu-330 is part of the active site. A disordered region spans residues 507–534 (VSGAVEVTPPPEENAPQEAEQTPVPKAE). Over residues 520–534 (NAPQEAEQTPVPKAE) the composition is skewed to low complexity.

This sequence in the N-terminal section; belongs to the bacterial solute-binding protein 3 family. In the C-terminal section; belongs to the transglycosylase Slt family.

The protein resides in the cell outer membrane. The catalysed reaction is Exolytic cleavage of the (1-&gt;4)-beta-glycosidic linkage between N-acetylmuramic acid (MurNAc) and N-acetylglucosamine (GlcNAc) residues in peptidoglycan, from either the reducing or the non-reducing ends of the peptidoglycan chains, with concomitant formation of a 1,6-anhydrobond in the MurNAc residue.. Functionally, murein-degrading enzyme that degrades murein glycan strands and insoluble, high-molecular weight murein sacculi, with the concomitant formation of a 1,6-anhydromuramoyl product. Lytic transglycosylases (LTs) play an integral role in the metabolism of the peptidoglycan (PG) sacculus. Their lytic action creates space within the PG sacculus to allow for its expansion as well as for the insertion of various structures such as secretion systems and flagella. The protein is Membrane-bound lytic murein transglycosylase F of Vibrio campbellii (strain ATCC BAA-1116).